The chain runs to 187 residues: Threonylcarbamoyl-AMP synthase (187 aa).

The YrdC-like domain occupies 4 to 187 (QSTIAAAITC…DAMNGKVFRG (184 aa)).

It belongs to the SUA5 family. TsaC subfamily.

Its subcellular location is the cytoplasm. The catalysed reaction is L-threonine + hydrogencarbonate + ATP = L-threonylcarbamoyladenylate + diphosphate + H2O. Its function is as follows. Required for the formation of a threonylcarbamoyl group on adenosine at position 37 (t(6)A37) in tRNAs that read codons beginning with adenine. Catalyzes the conversion of L-threonine, HCO(3)(-)/CO(2) and ATP to give threonylcarbamoyl-AMP (TC-AMP) as the acyladenylate intermediate, with the release of diphosphate. This Pseudoalteromonas translucida (strain TAC 125) protein is Threonylcarbamoyl-AMP synthase.